Reading from the N-terminus, the 494-residue chain is Probable cytosol aminopeptidase (494 aa).

Positions 260 and 265 each coordinate Mn(2+). The active site involves Lys272. Mn(2+) is bound by residues Asp283, Asp342, and Glu344. Arg346 is an active-site residue.

The protein belongs to the peptidase M17 family. Mn(2+) serves as cofactor.

It localises to the cytoplasm. The catalysed reaction is Release of an N-terminal amino acid, Xaa-|-Yaa-, in which Xaa is preferably Leu, but may be other amino acids including Pro although not Arg or Lys, and Yaa may be Pro. Amino acid amides and methyl esters are also readily hydrolyzed, but rates on arylamides are exceedingly low.. It carries out the reaction Release of an N-terminal amino acid, preferentially leucine, but not glutamic or aspartic acids.. Presumably involved in the processing and regular turnover of intracellular proteins. Catalyzes the removal of unsubstituted N-terminal amino acids from various peptides. In Bacillus cereus (strain ATCC 10987 / NRS 248), this protein is Probable cytosol aminopeptidase.